The primary structure comprises 746 residues: Exostosin-1 (746 aa).

Residues 1-7 (MQAKKRY) lie on the Cytoplasmic side of the membrane. The chain crosses the membrane as a helical; Signal-anchor for type II membrane protein span at residues 8-28 (FILLSAGSCLALLFYFGGLQF). Over 29 to 746 (RASRSHSRRE…RKKYRDIERL (718 aa)) the chain is Lumenal. Asparagine 89 carries an N-linked (GlcNAc...) asparagine glycan. Intrachain disulfides connect cysteine 98/cysteine 103 and cysteine 109/cysteine 152. Residues leucine 166 and tyrosine 203 each coordinate a protein. The UDP site is built by lysine 267, lysine 269, tyrosine 271, and arginine 280. A disulfide bridge links cysteine 298 with cysteine 312. Histidine 300 is an a protein binding site. UDP contacts are provided by tyrosine 319 and tyrosine 324. Residue asparagine 330 is glycosylated (N-linked (GlcNAc...) asparagine). Cystine bridges form between cysteine 334/cysteine 355 and cysteine 652/cysteine 704. UDP contacts are provided by arginine 346 and glutamate 349.

It belongs to the glycosyltransferase 47 family. Part of the heparan sulfate polymerase, a dimeric complex composed of EXT1 and EXT2. Could also form homooligomeric complexes. Interacts with NDST1. In terms of processing, N-glycosylated.

It is found in the golgi apparatus membrane. The protein resides in the golgi apparatus. Its subcellular location is the cis-Golgi network membrane. The protein localises to the endoplasmic reticulum membrane. The enzyme catalyses 3-O-{alpha-D-GlcNAc-[(1-&gt;4)-beta-D-GlcA-(1-&gt;4)-alpha-D-GlcNAc](n)-(1-&gt;4)-beta-D-GlcA-(1-&gt;3)-beta-D-Gal-(1-&gt;3)-beta-D-Gal-(1-&gt;4)-beta-D-Xyl}-L-seryl-[protein] + UDP-alpha-D-glucuronate = 3-O-{[(1-&gt;4)-beta-D-GlcA-(1-&gt;4)-alpha-D-GlcNAc](n+1)-(1-&gt;4)-beta-D-GlcA-(1-&gt;3)-beta-D-Gal-(1-&gt;3)-beta-D-Gal-(1-&gt;4)-beta-D-Xyl}-L-seryl-[protein] + UDP + H(+). It participates in protein modification; protein glycosylation. Functionally, glycosyltransferase forming with EXT2 the heterodimeric heparan sulfate polymerase which catalyzes the elongation of the heparan sulfate glycan backbone. Glycan backbone extension consists in the alternating transfer of (1-&gt;4)-beta-D-GlcA and (1-&gt;4)-alpha-D-GlcNAc residues from their respective UDP-sugar donors. Both EXT1 and EXT2 are required for the full activity of the polymerase since EXT1 bears the N-acetylglucosaminyl-proteoglycan 4-beta-glucuronosyltransferase activity within the complex while EXT2 carries the glucuronosyl-N-acetylglucosaminyl-proteoglycan 4-alpha-N-acetylglucosaminyltransferase activity. Heparan sulfate proteoglycans are ubiquitous components of the extracellular matrix and play an important role in tissue homeostasis and signaling. The chain is Exostosin-1 (EXT1) from Pongo abelii (Sumatran orangutan).